The sequence spans 396 residues: Elongation factor Tu (396 aa).

Residues K10–V205 enclose the tr-type G domain. The G1 stretch occupies residues G19–T26. G19–T26 provides a ligand contact to GTP. T26 contributes to the Mg(2+) binding site. The segment at G62–N66 is G2. The segment at D83–G86 is G3. Residues D83–H87 and N138–D141 each bind GTP. Residues N138–D141 are G4. The tract at residues S175–L177 is G5.

It belongs to the TRAFAC class translation factor GTPase superfamily. Classic translation factor GTPase family. EF-Tu/EF-1A subfamily. In terms of assembly, monomer.

The protein resides in the cytoplasm. It catalyses the reaction GTP + H2O = GDP + phosphate + H(+). GTP hydrolase that promotes the GTP-dependent binding of aminoacyl-tRNA to the A-site of ribosomes during protein biosynthesis. The chain is Elongation factor Tu from Rhodococcus erythropolis (strain PR4 / NBRC 100887).